A 325-amino-acid polypeptide reads, in one-letter code: DNA-directed RNA polymerase subunit alpha (325 aa).

Positions 1–238 (MSPKNLLKGF…DHLTVFINFE (238 aa)) are alpha N-terminal domain (alpha-NTD). The segment at 255-325 (LKAALSKHVE…MGLSFGMRDF (71 aa)) is alpha C-terminal domain (alpha-CTD).

Belongs to the RNA polymerase alpha chain family. As to quaternary structure, homodimer. The RNAP catalytic core consists of 2 alpha, 1 beta, 1 beta' and 1 omega subunit. When a sigma factor is associated with the core the holoenzyme is formed, which can initiate transcription.

It catalyses the reaction RNA(n) + a ribonucleoside 5'-triphosphate = RNA(n+1) + diphosphate. Functionally, DNA-dependent RNA polymerase catalyzes the transcription of DNA into RNA using the four ribonucleoside triphosphates as substrates. This Leptospira biflexa serovar Patoc (strain Patoc 1 / Ames) protein is DNA-directed RNA polymerase subunit alpha.